The following is a 715-amino-acid chain: 1,4-alpha-glucan branching enzyme GlgB (715 aa).

The active-site Nucleophile is aspartate 396. Glutamate 449 serves as the catalytic Proton donor.

It belongs to the glycosyl hydrolase 13 family. GlgB subfamily. In terms of assembly, monomer.

The enzyme catalyses Transfers a segment of a (1-&gt;4)-alpha-D-glucan chain to a primary hydroxy group in a similar glucan chain.. The protein operates within glycan biosynthesis; glycogen biosynthesis. Catalyzes the formation of the alpha-1,6-glucosidic linkages in glycogen by scission of a 1,4-alpha-linked oligosaccharide from growing alpha-1,4-glucan chains and the subsequent attachment of the oligosaccharide to the alpha-1,6 position. The polypeptide is 1,4-alpha-glucan branching enzyme GlgB (Vibrio vulnificus (strain CMCP6)).